Consider the following 417-residue polypeptide: Serine hydroxymethyltransferase (417 aa).

Residues L120 and 124–126 contribute to the (6S)-5,6,7,8-tetrahydrofolate site; that span reads GHL. K229 is subject to N6-(pyridoxal phosphate)lysine.

The protein belongs to the SHMT family. Homodimer. Pyridoxal 5'-phosphate serves as cofactor.

It localises to the cytoplasm. It catalyses the reaction (6R)-5,10-methylene-5,6,7,8-tetrahydrofolate + glycine + H2O = (6S)-5,6,7,8-tetrahydrofolate + L-serine. It functions in the pathway one-carbon metabolism; tetrahydrofolate interconversion. Its pathway is amino-acid biosynthesis; glycine biosynthesis; glycine from L-serine: step 1/1. Functionally, catalyzes the reversible interconversion of serine and glycine with tetrahydrofolate (THF) serving as the one-carbon carrier. This reaction serves as the major source of one-carbon groups required for the biosynthesis of purines, thymidylate, methionine, and other important biomolecules. Also exhibits THF-independent aldolase activity toward beta-hydroxyamino acids, producing glycine and aldehydes, via a retro-aldol mechanism. This Anaeromyxobacter sp. (strain K) protein is Serine hydroxymethyltransferase.